Here is a 316-residue protein sequence, read N- to C-terminus: Sulfate adenylyltransferase subunit 2 (316 aa).

The segment at 297–316 (RAIDRDQSGSMEKKKREGYF) is disordered.

It belongs to the PAPS reductase family. CysD subfamily. Heterodimer composed of CysD, the smaller subunit, and CysN.

The catalysed reaction is sulfate + ATP + H(+) = adenosine 5'-phosphosulfate + diphosphate. The protein operates within sulfur metabolism; hydrogen sulfide biosynthesis; sulfite from sulfate: step 1/3. Its function is as follows. With CysN forms the ATP sulfurylase (ATPS) that catalyzes the adenylation of sulfate producing adenosine 5'-phosphosulfate (APS) and diphosphate, the first enzymatic step in sulfur assimilation pathway. APS synthesis involves the formation of a high-energy phosphoric-sulfuric acid anhydride bond driven by GTP hydrolysis by CysN coupled to ATP hydrolysis by CysD. The protein is Sulfate adenylyltransferase subunit 2 of Allorhizobium ampelinum (strain ATCC BAA-846 / DSM 112012 / S4) (Agrobacterium vitis (strain S4)).